Reading from the N-terminus, the 342-residue chain is Trans-enoyl reductase himH (342 aa).

Residue 46–49 participates in NADP(+) binding; the sequence is TDWK. 133 to 140 lines the substrate pocket; that stretch reads LSVSTAAS. Residues 168-171, 191-194, 255-256, and 329-330 contribute to the NADP(+) site; these read SSSV, SQAN, VM, and VS.

It belongs to the zinc-containing alcohol dehydrogenase family. In terms of assembly, monomer.

It participates in secondary metabolite biosynthesis. Trans-enoyl reductase; part of the him gene cluster that mediates the biosynthesis of himeic acid A, a ubiquitin-activating enzyme (E1) inhibitor. First, himA, together with the trans-enoyl reductase himH, catalyzes the formation of apolyketide chain, which is then condensed with leucine by the NRPS activity of himA. Dieckmann cyclization and release from himA gives a tetramic acid intermediate as the product of himA PKS-NRPS. HimG then catalyzes alpha-oxidation of the tetramic acid ring, with a subsequent rearrangement to yield apyrone intermediate. Two terminal methyl groups of polyketide and amide side chains are oxidized to carboxylic acids by himC cytochrome P450 monooxygenase to form himeic acid A. Himeic acid A is further converted to himeic acid B and C during culture growth. No gene responsible for pyrone to pyridone conversion was found in the him gene cluster and himeic acid A is non-enzymatically converted to himeic acid C by the incorporation of an ammonium nitrogen atom in a pH5 buffer, and to himeic acid B at a conversion ratio of 50% during incubation in MeOH for 5 days. The chain is Trans-enoyl reductase himH from Aspergillus japonicus.